Consider the following 550-residue polypeptide: Arginine--tRNA ligase (550 aa).

A 'HIGH' region motif is present at residues 130–140 (ANPTGPIHLGG).

Belongs to the class-I aminoacyl-tRNA synthetase family. Monomer.

It localises to the cytoplasm. It catalyses the reaction tRNA(Arg) + L-arginine + ATP = L-arginyl-tRNA(Arg) + AMP + diphosphate. The sequence is that of Arginine--tRNA ligase (argS) from Corynebacterium glutamicum (strain ATCC 13032 / DSM 20300 / JCM 1318 / BCRC 11384 / CCUG 27702 / LMG 3730 / NBRC 12168 / NCIMB 10025 / NRRL B-2784 / 534).